A 266-amino-acid polypeptide reads, in one-letter code: Imidazole glycerol phosphate synthase subunit HisF (266 aa).

Catalysis depends on residues D11 and D130.

This sequence belongs to the HisA/HisF family. As to quaternary structure, heterodimer of HisH and HisF.

The protein localises to the cytoplasm. It carries out the reaction 5-[(5-phospho-1-deoxy-D-ribulos-1-ylimino)methylamino]-1-(5-phospho-beta-D-ribosyl)imidazole-4-carboxamide + L-glutamine = D-erythro-1-(imidazol-4-yl)glycerol 3-phosphate + 5-amino-1-(5-phospho-beta-D-ribosyl)imidazole-4-carboxamide + L-glutamate + H(+). Its pathway is amino-acid biosynthesis; L-histidine biosynthesis; L-histidine from 5-phospho-alpha-D-ribose 1-diphosphate: step 5/9. Its function is as follows. IGPS catalyzes the conversion of PRFAR and glutamine to IGP, AICAR and glutamate. The HisF subunit catalyzes the cyclization activity that produces IGP and AICAR from PRFAR using the ammonia provided by the HisH subunit. The chain is Imidazole glycerol phosphate synthase subunit HisF from Delftia acidovorans (strain DSM 14801 / SPH-1).